A 164-amino-acid chain; its full sequence is Histone H3-like centromeric protein CENH3 (164 aa).

Positions 1-11 are enriched in basic residues; the sequence is MARTKHPAVRK. Positions 1–71 are disordered; sequence MARTKHPAVR…QRKPHRFRPG (71 aa). The residue at position 5 (Lys5) is an N6,N6,N6-trimethyllysine; alternate. Lys5 carries the N6,N6-dimethyllysine; alternate modification. Residues Lys5, Lys19, and Lys30 each carry the N6-methyllysine; alternate modification. Residues 12-26 show a composition bias toward basic and acidic residues; it reads SKAEPKKKLQFERSP. Residue Lys19 is modified to N6-acetyllysine; alternate. Lys30 is modified (N6,N6,N6-trimethyllysine; alternate). Position 30 is an N6,N6-dimethyllysine; alternate (Lys30). Positions 40–55 are enriched in low complexity; that stretch reads TSATTRSAAGTSASGT. Residues 60-69 are compositionally biased toward basic residues; it reads TKQRKPHRFR.

It belongs to the histone H3 family.

The protein localises to the chromosome. It localises to the centromere. It is found in the kinetochore. Functionally, histone H3-like variant which exclusively replaces conventional H3 in the nucleosome core of centromeric chromatin at the inner plate of the kinetochore. Required for recruitment and assembly of kinetochore proteins, mitotic progression and chromosome segregation. The polypeptide is Histone H3-like centromeric protein CENH3 (Oryza sativa subsp. japonica (Rice)).